A 179-amino-acid chain; its full sequence is Large ribosomal subunit protein uL5 (179 aa).

This sequence belongs to the universal ribosomal protein uL5 family. Part of the 50S ribosomal subunit; part of the 5S rRNA/L5/L18/L25 subcomplex. Contacts the 5S rRNA and the P site tRNA. Forms a bridge to the 30S subunit in the 70S ribosome.

In terms of biological role, this is one of the proteins that bind and probably mediate the attachment of the 5S RNA into the large ribosomal subunit, where it forms part of the central protuberance. In the 70S ribosome it contacts protein S13 of the 30S subunit (bridge B1b), connecting the 2 subunits; this bridge is implicated in subunit movement. Contacts the P site tRNA; the 5S rRNA and some of its associated proteins might help stabilize positioning of ribosome-bound tRNAs. In Histophilus somni (strain 129Pt) (Haemophilus somnus), this protein is Large ribosomal subunit protein uL5.